Here is a 171-residue protein sequence, read N- to C-terminus: Ribosome maturation factor RimM (171 aa).

A PRC barrel domain is found at A96–L170.

It belongs to the RimM family. Binds ribosomal protein uS19.

It is found in the cytoplasm. Functionally, an accessory protein needed during the final step in the assembly of 30S ribosomal subunit, possibly for assembly of the head region. Essential for efficient processing of 16S rRNA. May be needed both before and after RbfA during the maturation of 16S rRNA. It has affinity for free ribosomal 30S subunits but not for 70S ribosomes. The sequence is that of Ribosome maturation factor RimM from Bacillus anthracis (strain A0248).